The chain runs to 153 residues: Insulin-like growth factor 1 (153 aa).

The interval 49–77 (GPETLCGAELVDALQFVCGPRGFYFNKPT) is b. 3 disulfide bridges follow: cysteine 54/cysteine 96, cysteine 66/cysteine 109, and cysteine 95/cysteine 100. Positions 78–89 (GYGSSIRRAPQT) are c. Residues 90–110 (GIVDECCFRSCDLRRLEMYCA) are a. Residues 111-118 (PLKPTKAA) form a d region. Residues 119-153 (RSIRAQRHTDMPKTQKEVHLKNTSRGSAGNKTYRM) constitute a propeptide, e peptide. Residues 120–153 (SIRAQRHTDMPKTQKEVHLKNTSRGSAGNKTYRM) are disordered. A compositionally biased stretch (basic and acidic residues) spans 125 to 138 (RHTDMPKTQKEVHL). Residues 139–153 (KNTSRGSAGNKTYRM) show a composition bias toward polar residues.

The protein belongs to the insulin family. Forms a ternary complex with IGFR1 and ITGAV:ITGB3. Forms a ternary complex with IGFR1 and ITGA6:ITGB4. Interacts with SH2D3C isoform 2. Forms a ternary complex with IGFBP3 and ALS.

The protein localises to the secreted. Its function is as follows. The insulin-like growth factors, isolated from plasma, are structurally and functionally related to insulin but have a much higher growth-promoting activity. May be a physiological regulator of [1-14C]-2-deoxy-D-glucose (2DG) transport and glycogen synthesis in osteoblasts. Stimulates glucose transport in bone-derived osteoblastic (PyMS) cells and is effective at much lower concentrations than insulin, not only regarding glycogen and DNA synthesis but also with regard to enhancing glucose uptake. May play a role in synapse maturation. Ca(2+)-dependent exocytosis of IGF1 is required for sensory perception of smell in the olfactory bulb. Acts as a ligand for IGF1R. Binds to the alpha subunit of IGF1R, leading to the activation of the intrinsic tyrosine kinase activity which autophosphorylates tyrosine residues in the beta subunit thus initiating a cascade of down-stream signaling events leading to activation of the PI3K-AKT/PKB and the Ras-MAPK pathways. Binds to integrins ITGAV:ITGB3 and ITGA6:ITGB4. Its binding to integrins and subsequent ternary complex formation with integrins and IGFR1 are essential for IGF1 signaling. Induces the phosphorylation and activation of IGFR1, MAPK3/ERK1, MAPK1/ERK2 and AKT1. As part of the MAPK/ERK signaling pathway, acts as a negative regulator of apoptosis in cardiomyocytes via promotion of STUB1/CHIP-mediated ubiquitination and degradation of ICER-type isoforms of CREM. This chain is Insulin-like growth factor 1, found in Mus musculus (Mouse).